The following is a 333-amino-acid chain: Transcription initiation factor IIB (333 aa).

A TFIIB-type zinc finger spans residues 33 to 64 (EVYRCPICGNDRFVYNYERGEIVCIVCGAVVQ). Zn(2+) is bound by residues Cys37, Cys40, Cys56, and Cys59. Tandem repeats lie at residues 149-232 (QELE…LREL) and 243-324 (LYIS…ELAK).

This sequence belongs to the TFIIB family.

Functionally, stabilizes TBP binding to an archaeal box-A promoter. Also responsible for recruiting RNA polymerase II to the pre-initiation complex (DNA-TBP-TFIIB). The sequence is that of Transcription initiation factor IIB from Pyrobaculum islandicum (strain DSM 4184 / JCM 9189 / GEO3).